Reading from the N-terminus, the 274-residue chain is Penicillin-insensitive murein endopeptidase (274 aa).

The first 19 residues, 1–19 (MNKTAIALLALLASSASLA), serve as a signal peptide directing secretion. 3 cysteine pairs are disulfide-bonded: C44-C265, C187-C235, and C216-C223. Residues H110, H113, D120, D147, H150, and H211 each coordinate Zn(2+). Positions 228–274 (LPPSGDGCGAELQSWFEPPKPGTTKPEKKTPPPLPPSCQALLDEHVI) are disordered.

The protein belongs to the peptidase M74 family. As to quaternary structure, dimer. Requires Zn(2+) as cofactor.

It localises to the periplasm. Its activity is regulated as follows. Inhibited by Zn(2+) at 10 mM and by metal chelating agents EDTA and 1,10-phenanthroline. Functionally, murein endopeptidase that cleaves the D-alanyl-meso-2,6-diamino-pimelyl amide bond that connects peptidoglycan strands. Likely plays a role in the removal of murein from the sacculus and could also play a role in the integration of nascent murein strands into the sacculus. The chain is Penicillin-insensitive murein endopeptidase (mepA) from Escherichia coli (strain K12).